Here is a 510-residue protein sequence, read N- to C-terminus: NAD(P)H-quinone oxidoreductase subunit 2 B, chloroplastic (510 aa).

12 helical membrane passes run 24 to 44, 59 to 79, 99 to 119, 124 to 144, 149 to 169, 183 to 203, 229 to 249, 295 to 315, 323 to 343, 354 to 374, 395 to 415, and 418 to 438; these read LLLFQGSSIFPECILIFGLIL, WFYFISSTSLVISITALLFRW, IFQFLILLCSTLCIPLSVEYI, MAITEFLLFVLTATLGGMFLC, LITIFVAPECFSLCSYLLSGY, YLLMGGASSSILVHGFSWLYG, ISIALISITVGLGFKLSPAPF, WHLLLEILAILSMILGNLLAI, MLAYSSIGQIGYVIIGIIVGD, YMLFYISMNLGTFACIVLFGL, ALSLALCLLSLGGLPPLAGFF, and LYLFWCGWQAGLYLLVSIGLL.

The protein belongs to the complex I subunit 2 family. In terms of assembly, NDH is composed of at least 16 different subunits, 5 of which are encoded in the nucleus.

The protein localises to the plastid. It is found in the chloroplast thylakoid membrane. The enzyme catalyses a plastoquinone + NADH + (n+1) H(+)(in) = a plastoquinol + NAD(+) + n H(+)(out). It carries out the reaction a plastoquinone + NADPH + (n+1) H(+)(in) = a plastoquinol + NADP(+) + n H(+)(out). Its function is as follows. NDH shuttles electrons from NAD(P)H:plastoquinone, via FMN and iron-sulfur (Fe-S) centers, to quinones in the photosynthetic chain and possibly in a chloroplast respiratory chain. The immediate electron acceptor for the enzyme in this species is believed to be plastoquinone. Couples the redox reaction to proton translocation, and thus conserves the redox energy in a proton gradient. The polypeptide is NAD(P)H-quinone oxidoreductase subunit 2 B, chloroplastic (Agrostis stolonifera (Creeping bentgrass)).